Consider the following 79-residue polypeptide: Translational regulator CsrA (79 aa).

Belongs to the CsrA/RsmA family. Homodimer; the beta-strands of each monomer intercalate to form a hydrophobic core, while the alpha-helices form wings that extend away from the core.

It localises to the cytoplasm. Its function is as follows. A translational regulator that binds mRNA to regulate translation initiation and/or mRNA stability. Usually binds in the 5'-UTR at or near the Shine-Dalgarno sequence preventing ribosome-binding, thus repressing translation. Its main target seems to be the major flagellin gene, while its function is anatagonized by FliW. This is Translational regulator CsrA from Maridesulfovibrio salexigens (strain ATCC 14822 / DSM 2638 / NCIMB 8403 / VKM B-1763) (Desulfovibrio salexigens).